The sequence spans 346 residues: Nicotinate-nucleotide--dimethylbenzimidazole phosphoribosyltransferase (346 aa).

The Proton acceptor role is filled by E312.

Belongs to the CobT family.

It catalyses the reaction 5,6-dimethylbenzimidazole + nicotinate beta-D-ribonucleotide = alpha-ribazole 5'-phosphate + nicotinate + H(+). The protein operates within nucleoside biosynthesis; alpha-ribazole biosynthesis; alpha-ribazole from 5,6-dimethylbenzimidazole: step 1/2. Catalyzes the synthesis of alpha-ribazole-5'-phosphate from nicotinate mononucleotide (NAMN) and 5,6-dimethylbenzimidazole (DMB). This Cupriavidus taiwanensis (strain DSM 17343 / BCRC 17206 / CCUG 44338 / CIP 107171 / LMG 19424 / R1) (Ralstonia taiwanensis (strain LMG 19424)) protein is Nicotinate-nucleotide--dimethylbenzimidazole phosphoribosyltransferase.